The following is a 235-amino-acid chain: Secreted RxLR effector protein 27 (235 aa).

Positions 1 to 25 (MTNLFTRHTRRSLTALALLSGGVYA) are cleaved as a signal peptide. The RxLR-dEER motif lies at 36 to 60 (RSLRVFVTGGQVLWDYRIHFKGIER).

Belongs to the RxLR effector family.

It is found in the secreted. Its subcellular location is the host cytoplasm. The protein localises to the host nucleus. Effector that acts as a broad suppressor of cell death to interrupt plant immunity. Inhibits cell death induced by cell death-inducing proteins, including the PAMP elicitor INF1 from P.infestans. This chain is Secreted RxLR effector protein 27, found in Plasmopara viticola (Downy mildew of grapevine).